Here is a 418-residue protein sequence, read N- to C-terminus: Histidinol dehydrogenase (418 aa).

NAD(+) contacts are provided by tyrosine 119, glutamine 180, and asparagine 203. Substrate contacts are provided by threonine 226, glutamine 248, and histidine 251. Positions 248 and 251 each coordinate Zn(2+). Residues glutamate 316 and histidine 317 each act as proton acceptor in the active site. Histidine 317, aspartate 350, glutamate 404, and histidine 409 together coordinate substrate. Aspartate 350 is a binding site for Zn(2+). Histidine 409 lines the Zn(2+) pocket.

This sequence belongs to the histidinol dehydrogenase family. The cofactor is Zn(2+).

The catalysed reaction is L-histidinol + 2 NAD(+) + H2O = L-histidine + 2 NADH + 3 H(+). Its pathway is amino-acid biosynthesis; L-histidine biosynthesis; L-histidine from 5-phospho-alpha-D-ribose 1-diphosphate: step 9/9. Its function is as follows. Catalyzes the sequential NAD-dependent oxidations of L-histidinol to L-histidinaldehyde and then to L-histidine. The chain is Histidinol dehydrogenase from Staphylococcus aureus (strain MSSA476).